Consider the following 316-residue polypeptide: ATP synthase gamma chain (316 aa).

It belongs to the ATPase gamma chain family. In terms of assembly, F-type ATPases have 2 components, CF(1) - the catalytic core - and CF(0) - the membrane proton channel. CF(1) has five subunits: alpha(3), beta(3), gamma(1), delta(1), epsilon(1). CF(0) has three main subunits: a, b and c.

The protein resides in the cellular thylakoid membrane. Produces ATP from ADP in the presence of a proton gradient across the membrane. The gamma chain is believed to be important in regulating ATPase activity and the flow of protons through the CF(0) complex. The sequence is that of ATP synthase gamma chain from Prochlorococcus marinus (strain MIT 9515).